Consider the following 169-residue polypeptide: Crossover junction endodeoxyribonuclease RuvC (169 aa).

Active-site residues include Asp-7, Glu-67, and Asp-139. 3 residues coordinate Mg(2+): Asp-7, Glu-67, and Asp-139.

This sequence belongs to the RuvC family. Homodimer which binds Holliday junction (HJ) DNA. The HJ becomes 2-fold symmetrical on binding to RuvC with unstacked arms; it has a different conformation from HJ DNA in complex with RuvA. In the full resolvosome a probable DNA-RuvA(4)-RuvB(12)-RuvC(2) complex forms which resolves the HJ. The cofactor is Mg(2+).

The protein resides in the cytoplasm. It carries out the reaction Endonucleolytic cleavage at a junction such as a reciprocal single-stranded crossover between two homologous DNA duplexes (Holliday junction).. Functionally, the RuvA-RuvB-RuvC complex processes Holliday junction (HJ) DNA during genetic recombination and DNA repair. Endonuclease that resolves HJ intermediates. Cleaves cruciform DNA by making single-stranded nicks across the HJ at symmetrical positions within the homologous arms, yielding a 5'-phosphate and a 3'-hydroxyl group; requires a central core of homology in the junction. The consensus cleavage sequence is 5'-(A/T)TT(C/G)-3'. Cleavage occurs on the 3'-side of the TT dinucleotide at the point of strand exchange. HJ branch migration catalyzed by RuvA-RuvB allows RuvC to scan DNA until it finds its consensus sequence, where it cleaves and resolves the cruciform DNA. This is Crossover junction endodeoxyribonuclease RuvC from Rhodospirillum rubrum (strain ATCC 11170 / ATH 1.1.1 / DSM 467 / LMG 4362 / NCIMB 8255 / S1).